The following is a 321-amino-acid chain: Methionyl-tRNA formyltransferase (321 aa).

113 to 116 contacts (6S)-5,6,7,8-tetrahydrofolate; sequence SILP.

Belongs to the Fmt family.

It carries out the reaction L-methionyl-tRNA(fMet) + (6R)-10-formyltetrahydrofolate = N-formyl-L-methionyl-tRNA(fMet) + (6S)-5,6,7,8-tetrahydrofolate + H(+). Attaches a formyl group to the free amino group of methionyl-tRNA(fMet). The formyl group appears to play a dual role in the initiator identity of N-formylmethionyl-tRNA by promoting its recognition by IF2 and preventing the misappropriation of this tRNA by the elongation apparatus. This is Methionyl-tRNA formyltransferase from Pseudoalteromonas translucida (strain TAC 125).